The chain runs to 216 residues: Small ribosomal subunit protein uS2 (216 aa).

This sequence belongs to the universal ribosomal protein uS2 family.

The protein is Small ribosomal subunit protein uS2 of Carsonella ruddii (strain PV).